Consider the following 505-residue polypeptide: Serine/threonine-protein kinase D (505 aa).

One can recognise a Protein kinase domain in the interval 9-271; it reads YEIVKSLGSG…AMYQALHSLI (263 aa). ATP contacts are provided by residues 15–23 and lysine 40; that span reads LGSGGFGDT. Catalysis depends on aspartate 136, which acts as the Proton acceptor. Residues 436–505 form the SH3b domain; the sequence is GASATIGGIP…GWIASQLVNF (70 aa).

It belongs to the protein kinase superfamily. Ser/Thr protein kinase family.

It carries out the reaction L-seryl-[protein] + ATP = O-phospho-L-seryl-[protein] + ADP + H(+). The enzyme catalyses L-threonyl-[protein] + ATP = O-phospho-L-threonyl-[protein] + ADP + H(+). This Synechocystis sp. (strain ATCC 27184 / PCC 6803 / Kazusa) protein is Serine/threonine-protein kinase D (spkD).